The sequence spans 336 residues: Ketoreductase adrE (336 aa).

Tyrosine 171 serves as a coordination point for NADP(+).

It belongs to the NAD(P)-dependent epimerase/dehydratase family. Dihydroflavonol-4-reductase subfamily.

It participates in secondary metabolite biosynthesis; terpenoid biosynthesis. Its function is as follows. Ketoreductase; part of the gene cluster that mediates the biosynthesis of andrastins, meroterpenoid compounds that exhibit inhibitory activity against ras farnesyltransferase, suggesting that they could be promising leads for antitumor agents. The first step of the pathway is the synthesis of 3,5-dimethylorsellinic acid (DMOA) by the polyketide synthase adrD via condensation of one acetyl-CoA starter unit with 3 malonyl-CoA units and 2 methylations. DMAO is then converted to farnesyl-DMAO by the prenyltransferase adrG. The methyltransferase adrK catalyzes the methylation of the carboxyl group of farnesyl-DMAO to farnesyl-DMAO methyl ester which is further converted to epoxyfarnesyl-DMAO methyl ester by the FAD-dependent monooxygenase adrH. The terpene cyclase adrI then catalyzes the carbon skeletal rearrangement to generate the andrastin E, the first compound in the pathway having the andrastin scaffold, with the tetracyclic ring system. The post-cyclization tailoring enzymes adrF, adrE, adrJ, and adrA, are involved in the conversion of andrastin E into andrastin A. The short chain dehydrogenase adrF is responsible for the oxidation of the C-3 a hydroxyl group of andrastin E to yield the corresponding ketone, andrastin D. The ketoreductase adrE stereoselectively reduces the carbonyl moiety to reverse the stereochemistry of the C-3 position to yield andrastin F. The acetyltransferase adrJ is the acetyltransferase that attaches the acetyl group to the C-3 hydroxyl group of andrastin F to yield andrastin C. Finally, the cytochrome P450 monooxygenase adrA catalyzes two sequential oxidation reactions of the C-23 methyl group, to generate the corresponding alcohol andrastin B, and aldehyde andrastin A. The sequence is that of Ketoreductase adrE from Penicillium roqueforti.